Here is a 480-residue protein sequence, read N- to C-terminus: Glycogen synthase (480 aa).

The protein belongs to the glycosyltransferase 1 family. Bacterial/plant glycogen synthase subfamily.

The catalysed reaction is [(1-&gt;4)-alpha-D-glucosyl](n) + ADP-alpha-D-glucose = [(1-&gt;4)-alpha-D-glucosyl](n+1) + ADP + H(+). The protein operates within glycan biosynthesis; glycogen biosynthesis. Its function is as follows. Synthesizes alpha-1,4-glucan chains using ADP-glucose. The polypeptide is Glycogen synthase (Rhizobium etli (strain ATCC 51251 / DSM 11541 / JCM 21823 / NBRC 15573 / CFN 42)).